Consider the following 156-residue polypeptide: MNRKKTRELTMKLLFQMAINKEKADVIISNLKENIEMEQGSQKNSISQIYGENMGDLKNIDIDYVVRVLRGIEKNEDMLNIEIEKYLRNWKLNRLSKVDSAILKICTYEFLHEDDIPEKVSINEAIELAKKYSSEKSASFINGVLGNMIKDEKIKK.

Belongs to the NusB family.

Its function is as follows. Involved in transcription antitermination. Required for transcription of ribosomal RNA (rRNA) genes. Binds specifically to the boxA antiterminator sequence of the ribosomal RNA (rrn) operons. This is Transcription antitermination protein NusB from Clostridium kluyveri (strain ATCC 8527 / DSM 555 / NBRC 12016 / NCIMB 10680 / K1).